Here is a 303-residue protein sequence, read N- to C-terminus: Lysosomal amino acid transporter 1 homolog (303 aa).

Residues 1 to 38 (MAEGLRAPPPPGNGSECPDGARWVLRLLGECARDGRDV) are Lumenal-facing. N13 carries an N-linked (GlcNAc...) asparagine glycan. One can recognise a PQ-loop 1 domain in the interval 36–102 (RDVGSALLGL…LANQLPLQVY (67 aa)). The chain crosses the membrane as a helical span at residues 39-59 (GSALLGLLSIGCFAAAALPQF). The Cytoplasmic segment spans residues 60 to 73 (YQACKTGIMDRALS). A helical membrane pass occupies residues 74–94 (IYFLLGWLGGDLLNLIGSFLA). Residues 95 to 96 (NQ) are Lumenal-facing. Residues 97 to 117 (LPLQVYTAVYYVLADLVMLSL) form a helical membrane-spanning segment. Residues 118-131 (YGYYKAKNWGTGAT) are Cytoplasmic-facing. The chain crosses the membrane as a helical span at residues 132-152 (ASINAACLFCLLGTATTLTVL). Residues 153 to 182 (SHDTGPAPNPAAFGGRSLLSLGLEGPGPEP) lie on the Lumenal side of the membrane. A helical transmembrane segment spans residues 183–203 (ISKTEIIGFAIGSISSVLYLC). The 66-residue stretch at 186–251 (TEIIGFAIGS…LKNPEPGQSE (66 aa)) folds into the PQ-loop 2 domain. Topologically, residues 204-220 (SRLPQIYTNYRRKSTAG) are cytoplasmic. The chain crosses the membrane as a helical span at residues 221 to 241 (VSFLLFALVMLGNLLYGTSVL). At 242–260 (LKNPEPGQSEGDYILHHLP) the chain is on the lumenal side. A helical membrane pass occupies residues 261–281 (WLIGSLGVLSLDVIISFQFLA). Residues 282-303 (YRTGQPSAGEEREALLAEHGDS) are Cytoplasmic-facing. The Di-leucine motif motif lies at 296-297 (LL).

This sequence belongs to the laat-1 family.

The protein resides in the lysosome membrane. Functionally, amino acid transporter that specifically mediates the pH-dependent export of the cationic amino acids arginine, histidine and lysine from lysosomes. The polypeptide is Lysosomal amino acid transporter 1 homolog (SLC66A1) (Gallus gallus (Chicken)).